The primary structure comprises 387 residues: GTPase Obg (387 aa).

Positions 1 to 159 (MKFVDEVEIR…RSLKLELLLL (159 aa)) constitute an Obg domain. One can recognise an OBG-type G domain in the interval 160–333 (ADVGLLGLPN…LTQKVMTFIE (174 aa)). Residues 166–173 (GLPNAGKS), 191–195 (FTTLV), 213–216 (DIPG), 283–286 (NKLD), and 314–316 (SAF) each bind GTP. 2 residues coordinate Mg(2+): Ser173 and Thr193. The disordered stretch occupies residues 361–387 (AAHSQDDDLDDDDWDEDDYDVEVEYRQ). Positions 367–387 (DDLDDDDWDEDDYDVEVEYRQ) are enriched in acidic residues.

It belongs to the TRAFAC class OBG-HflX-like GTPase superfamily. OBG GTPase family. Monomer. The cofactor is Mg(2+).

The protein resides in the cytoplasm. Its function is as follows. An essential GTPase which binds GTP, GDP and possibly (p)ppGpp with moderate affinity, with high nucleotide exchange rates and a fairly low GTP hydrolysis rate. Plays a role in control of the cell cycle, stress response, ribosome biogenesis and in those bacteria that undergo differentiation, in morphogenesis control. This is GTPase Obg from Colwellia psychrerythraea (strain 34H / ATCC BAA-681) (Vibrio psychroerythus).